The chain runs to 253 residues: Shikimate dehydrogenase (253 aa).

K63 functions as the Proton acceptor in the catalytic mechanism. An NADP(+)-binding site is contributed by 115 to 119 (GAGGA).

It belongs to the shikimate dehydrogenase family.

The enzyme catalyses shikimate + NADP(+) = 3-dehydroshikimate + NADPH + H(+). It functions in the pathway metabolic intermediate biosynthesis; chorismate biosynthesis; chorismate from D-erythrose 4-phosphate and phosphoenolpyruvate: step 4/7. The polypeptide is Shikimate dehydrogenase (aroE) (Thermotoga neapolitana (strain ATCC 49049 / DSM 4359 / NBRC 107923 / NS-E)).